The following is a 335-amino-acid chain: Acetyl-coenzyme A carboxylase carboxyl transferase subunit alpha (335 aa).

Residues 38-292 form the CoA carboxyltransferase C-terminal domain; that stretch reads TLEQKAEELR…ATALSEEIEN (255 aa).

It belongs to the AccA family. As to quaternary structure, acetyl-CoA carboxylase is a heterohexamer composed of biotin carboxyl carrier protein (AccB), biotin carboxylase (AccC) and two subunits each of ACCase subunit alpha (AccA) and ACCase subunit beta (AccD).

It is found in the cytoplasm. It carries out the reaction N(6)-carboxybiotinyl-L-lysyl-[protein] + acetyl-CoA = N(6)-biotinyl-L-lysyl-[protein] + malonyl-CoA. It participates in lipid metabolism; malonyl-CoA biosynthesis; malonyl-CoA from acetyl-CoA: step 1/1. Functionally, component of the acetyl coenzyme A carboxylase (ACC) complex. First, biotin carboxylase catalyzes the carboxylation of biotin on its carrier protein (BCCP) and then the CO(2) group is transferred by the carboxyltransferase to acetyl-CoA to form malonyl-CoA. The chain is Acetyl-coenzyme A carboxylase carboxyl transferase subunit alpha from Heliobacterium modesticaldum (strain ATCC 51547 / Ice1).